We begin with the raw amino-acid sequence, 639 residues long: UvrABC system protein C (639 aa).

In terms of domain architecture, GIY-YIG spans 20–97; it reads ERSGVYRMFD…IKKFQPKFNI (78 aa). The region spanning 207 to 242 is the UVR domain; sequence KELQENLSRKMEELSSQMRFEEAAEIRDRIKALSYV.

The protein belongs to the UvrC family. In terms of assembly, interacts with UvrB in an incision complex.

Its subcellular location is the cytoplasm. Functionally, the UvrABC repair system catalyzes the recognition and processing of DNA lesions. UvrC both incises the 5' and 3' sides of the lesion. The N-terminal half is responsible for the 3' incision and the C-terminal half is responsible for the 5' incision. In Rickettsia peacockii (strain Rustic), this protein is UvrABC system protein C.